The sequence spans 638 residues: NBPF family member NBPF6 (638 aa).

2 coiled-coil regions span residues 10–43 (SERA…EKFL) and 69–115 (DSVL…KLRE). A disordered region spans residues 157-285 (HLVHKLSPEN…VPPRHHDKSN (129 aa)). Residues 165-179 (ENDEDEDEDEDDKDE) show a composition bias toward acidic residues. Residues 174–261 (EDDKDEEVEK…EEEEALNIPP (88 aa)) enclose the Olduvai 1 domain. The segment covering 192–202 (EVQKTEEKEVP) has biased composition (basic and acidic residues). Residues 214 to 226 (SNSHNPSNSNQPH) are compositionally biased toward low complexity. 2 stretches are compositionally biased toward basic and acidic residues: residues 232-251 (TFKE…HPHD) and 264-273 (QNDHEEEEGK). Olduvai domains follow at residues 326 to 399 (EKQS…ALVD) and 400 to 503 (KIKK…SQAQ). A disordered region spans residues 563–584 (MKNPPQLEDDALEGSASNTQGR).

This sequence belongs to the NBPF family.

The protein resides in the cytoplasm. The protein is NBPF family member NBPF6 of Homo sapiens (Human).